The primary structure comprises 559 residues: Subtelomeric hrmA-associated cluster protein AFUB_079030 (559 aa).

Disordered stretches follow at residues 163-190 (AKHP…TKPE), 298-351 (RESN…TGMA), 427-451 (SITS…HSAS), and 525-559 (FRTG…RPHV). Over residues 169–179 (GGKPPAGAPPG) the composition is skewed to low complexity. Composition is skewed to basic and acidic residues over residues 180 to 189 (KKGDPEKTKP) and 300 to 325 (SNQK…DNAR). Over residues 336-346 (NSTSPMSNSAE) the composition is skewed to polar residues.

In terms of biological role, part of the subtelomeric hrmA-associated cluster (HAC) containing genes that alter the hyphal surface (such as reduced total chitin or increased beta-glucan exposure) and perturb inter-hyphal interactions within the developing biofilms, resulting in a loss of vertically aligned polarized growing filaments. Consequently, this hypoxia-typic morphotype (called H-MORPH) with altered biofilm architecture leads to increased hypoxia fitness, increased host inflammation, rapid disease progression, and mortality in a murine model of invasive aspergillosis. The polypeptide is Subtelomeric hrmA-associated cluster protein AFUB_079030 (Aspergillus fumigatus (strain CBS 144.89 / FGSC A1163 / CEA10) (Neosartorya fumigata)).